Reading from the N-terminus, the 122-residue chain is Large ribosomal subunit protein uL14 (122 aa).

Belongs to the universal ribosomal protein uL14 family. Part of the 50S ribosomal subunit. Forms a cluster with proteins L3 and L19. In the 70S ribosome, L14 and L19 interact and together make contacts with the 16S rRNA in bridges B5 and B8.

Functionally, binds to 23S rRNA. Forms part of two intersubunit bridges in the 70S ribosome. The polypeptide is Large ribosomal subunit protein uL14 (Thermus aquaticus).